Reading from the N-terminus, the 895-residue chain is Receptor-like protein kinase FERONIA (895 aa).

An N-terminal signal peptide occupies residues 1-27 (MKITEGRFRLSLLLLLLLISAATLISA). Over 28–447 (ADYSPTEKIL…TTRKSKSNTA (420 aa)) the chain is Extracellular. Asn-46, Asn-124, Asn-142, Asn-171, Asn-219, Asn-269, Asn-305, Asn-330, Asn-345, and Asn-410 each carry an N-linked (GlcNAc...) asparagine glycan. The chain crosses the membrane as a helical span at residues 448-468 (IIAGAASGAVVLALIIGFCVF). Topologically, residues 469-895 (GAYRRRKRGD…FSQIMNPKGR (427 aa)) are cytoplasmic. Residues 536–810 (FDESRVLGVG…GDVLWNLEFA (275 aa)) form the Protein kinase domain. ATP-binding positions include 542-550 (LGVGGFGKV) and Lys-565. Asp-661 (proton acceptor) is an active-site residue. Residues 844–895 (NDKSSDVYEGNVTDSRSSGIDMSIGGRSLASEDSDGLTPSAVFSQIMNPKGR) are disordered. 4 positions are modified to phosphoserine: Ser-858, Ser-866, Ser-871, and Ser-874. Positions 884–895 (AVFSQIMNPKGR) are enriched in polar residues.

Belongs to the protein kinase superfamily. Ser/Thr protein kinase family. As to quaternary structure, interacts with ROPGEF1. Interacts with RALF1; triggering phosphorylation status and subsequent activation. Interacts with LRE and LLG1. Interacts, via its extracellular domain, with FERONIA at the synergid cell surface. Autophosphorylated. Post-translationally, phosphorylated at Ser-858, Ser-871 and Ser-874 upon activation by RALF1. Expressed in leaves, buds, flowers, siliques, young ovules primordia, and young anthers with immature pollen, but not detected in mature pollen. Highest expression in the synergid cells of the female gametophyte.

The protein localises to the cell membrane. The catalysed reaction is L-seryl-[protein] + ATP = O-phospho-L-seryl-[protein] + ADP + H(+). It catalyses the reaction L-threonyl-[protein] + ATP = O-phospho-L-threonyl-[protein] + ADP + H(+). Functionally, receptor-like protein kinase that mediates the female control of male gamete delivery during fertilization, including growth cessation of compatible pollen tubes ensuring a reproductive isolation barriers, by regulating MLO7 subcellular polarization upon pollen tube perception in the female gametophyte synergids. Required for cell elongation during vegetative growth, mostly in a brassinosteroids- (BR-) independent manner. Acts as an upstream regulator for the Rac/Rop-signaling pathway that controls ROS-mediated root hair development. Seems to regulate a cross-talk between brassinosteroids and ethylene signaling pathways during hypocotyl elongation. Negative regulator of brassinosteroid response in light-grown hypocotyls, but required for brassinosteroid response in etiolated seedlings. Mediates sensitivity to powdery mildew (e.g. Golovinomyces orontii). Positive regulator of auxin-promoted growth that represses the abscisic acid (ABA) signaling via the activation of ABI2 phosphatase. Required for RALF1-mediated extracellular alkalinization in a signaling pathway preventing cell expansion. The polypeptide is Receptor-like protein kinase FERONIA (Arabidopsis thaliana (Mouse-ear cress)).